Consider the following 879-residue polypeptide: Alanine--tRNA ligase (879 aa).

4 residues coordinate Zn(2+): H566, H570, C668, and H672.

Belongs to the class-II aminoacyl-tRNA synthetase family. Zn(2+) serves as cofactor.

It is found in the cytoplasm. The enzyme catalyses tRNA(Ala) + L-alanine + ATP = L-alanyl-tRNA(Ala) + AMP + diphosphate. Catalyzes the attachment of alanine to tRNA(Ala) in a two-step reaction: alanine is first activated by ATP to form Ala-AMP and then transferred to the acceptor end of tRNA(Ala). Also edits incorrectly charged Ser-tRNA(Ala) and Gly-tRNA(Ala) via its editing domain. This chain is Alanine--tRNA ligase, found in Clostridium botulinum (strain Alaska E43 / Type E3).